The following is a 1386-amino-acid chain: Rab3 GTPase-activating protein non-catalytic subunit (1386 aa).

Residues 31–69 (GALRRDPSKTSNWEDDSWGAWEETEPQEPEEEGNTSKTQ) are disordered. Ser-38 is modified (phosphoserine). Over residues 43-63 (WEDDSWGAWEETEPQEPEEEG) the composition is skewed to acidic residues. Ser-448 carries the phosphoserine modification. A Phosphothreonine modification is found at Thr-899. Ser-914 carries the phosphoserine modification. Positions 959–973 (REKDVENPDEPREGI) are enriched in basic and acidic residues. A disordered region spans residues 959–982 (REKDVENPDEPREGIARSPPEVSE). Ser-976 bears the Phosphoserine mark.

This sequence belongs to the Rab3-GAP regulatory subunit family. In terms of assembly, the Rab3 GTPase-activating complex is a heterodimer composed of Rab3gap1 and Rab3gap2. The Rab3 GTPase-activating complex interacts with DMXL2. Interacts with LMAN1.

The protein resides in the cytoplasm. It is found in the endoplasmic reticulum. In terms of biological role, regulatory subunit of the Rab3 GTPase-activating (Rab3GAP) complex composed of RAB3GAP1 and RAB3GAP2, which has GTPase-activating protein (GAP) activity towards various Rab3 subfamily members (RAB3A, RAB3B, RAB3C and RAB3D), RAB5A and RAB43, and guanine nucleotide exchange factor (GEF) activity towards RAB18. As part of the Rab3GAP complex, acts as a GAP for Rab3 proteins by converting active RAB3-GTP to the inactive form RAB3-GDP. Rab3 proteins are involved in regulated exocytosis of neurotransmitters and hormones. The Rab3GAP complex acts as a GEF for RAB18 by promoting the conversion of inactive RAB18-GDP to the active form RAB18-GTP. Recruits and stabilizes RAB18 at the cis-Golgi membrane in fibroblasts where RAB18 is most likely activated. Also involved in RAB18 recruitment at the endoplasmic reticulum (ER) membrane where it maintains proper ER structure. Required for normal eye and brain development. May participate in neurodevelopmental processes such as proliferation, migration and differentiation before synapse formation, and non-synaptic vesicular release of neurotransmitters. The polypeptide is Rab3 GTPase-activating protein non-catalytic subunit (Rattus norvegicus (Rat)).